The sequence spans 99 residues: Cysteine-rich C-terminal protein 1 (99 aa).

Disordered regions lie at residues 1–42 (MSSQ…CCGS) and 65–99 (RRRR…CSGC). The span at 22 to 32 (APCPAPAPTPA) shows a compositional bias: pro residues. The span at 83–99 (QRSQRSNNRSSGCCSGC) shows a compositional bias: low complexity.

This is Cysteine-rich C-terminal protein 1 (CRCT1) from Homo sapiens (Human).